The primary structure comprises 470 residues: Dihydrolipoyl dehydrogenase (470 aa).

FAD-binding positions include 39–47 (EKATLGGVC), lysine 56, and alanine 119. An intrachain disulfide couples cysteine 47 to cysteine 52. NAD(+) is bound by residues 183–187 (GGGYI), glutamate 206, and 272–275 (TVGR). 2 residues coordinate FAD: aspartate 315 and alanine 323. The active-site Proton acceptor is histidine 447.

The protein belongs to the class-I pyridine nucleotide-disulfide oxidoreductase family. As to quaternary structure, homodimer. Component of two multienzyme complexes: pyruvate dehydrogenase complex and oxoglutarate dehydrogenase complex. The cofactor is FAD.

The protein localises to the cytoplasm. It catalyses the reaction N(6)-[(R)-dihydrolipoyl]-L-lysyl-[protein] + NAD(+) = N(6)-[(R)-lipoyl]-L-lysyl-[protein] + NADH + H(+). Functionally, catalyzes the oxidation of dihydrolipoamide to lipoamide. The polypeptide is Dihydrolipoyl dehydrogenase (pdhD) (Bacillus subtilis (strain 168)).